A 222-amino-acid polypeptide reads, in one-letter code: Gamma-glutamyl cyclotransferase gliK (222 aa).

The next 2 membrane-spanning stretches (helical) occupy residues 154–174 (GWWF…AAII) and 187–207 (GHVP…MWAQ).

Belongs to the class-I pyridoxal-phosphate-dependent aminotransferase family.

The protein localises to the membrane. It carries out the reaction an alpha-(gamma-L-glutamyl)-L-amino acid = 5-oxo-L-proline + an L-alpha-amino acid. It participates in secondary metabolite biosynthesis. Gamma-glutamyl cyclotransferase; part of the gene cluster that mediates the biosynthesis of an unusual class of epipolythiodioxopiperazines (ETPs) lacking the reactive thiol group important for toxicity. Firstly, L-tyrosine is prenylated by tcpD, before undergoing condensation with L-glycine in a reaction catalyzed by the NRPS tcpP leading to the diketopiperazine (DKP) backbone. Afterwards the alpha-carbon of tyrosine is oxidized by the cytochrome P450 tcpC to form a hydroxyl group. However, in contrast other ETP biosynthesis pathways studied so far, tcpC is not able to bishydroxylate the DKP at both alpha-carbon positions, but hydroxylates the alpha-carbon of the tyrosine part and the nitrogen of the glycine part. The next steps involve an alpha,beta-elimination reaction catalyzed by tcpI, a methylation by the methyltransferase tcpN the action of the four enzyme cascade tcpG/K/J/I. Due to a dysfunctional cytochrome P450 monooxygenase tcpC, the pathway leads to the biosynthesis of probable non-toxic metabolites lacking the reactive thiol group. The protein is Gamma-glutamyl cyclotransferase gliK of Claviceps purpurea (strain 20.1) (Ergot fungus).